The chain runs to 597 residues: Dynein intermediate chain 3, ciliary (597 aa).

WD repeat units follow at residues Glu-159–Phe-210, Lys-213–Glu-253, Ser-260–Glu-301, Glu-314–Lys-354, Glu-361–Met-400, Tyr-404–Thr-444, and Val-449–Gln-488. Disordered stretches follow at residues Arg-512–Ala-546 and Ala-562–Gly-597. Positions Gln-528–Leu-542 are enriched in acidic residues. Over residues Gly-584 to Gly-597 the composition is skewed to basic and acidic residues.

It belongs to the dynein intermediate chain family. Consists of at least two heavy chains (alpha and beta), three intermediate chains and several light chains.

It localises to the cytoplasm. The protein localises to the cytoskeleton. Its subcellular location is the cilium axoneme. Its function is as follows. May play a role in the regulation of dynein heavy chain activity. The chain is Dynein intermediate chain 3, ciliary from Heliocidaris crassispina (Sea urchin).